The primary structure comprises 258 residues: Transcription factor ORG3 (258 aa).

Residues 76–128 (VKKLNHNASERDRRRKINSLFSSLRSCLPASGQSKKLSIPATVSRSLKYIPEL) form the bHLH domain.

Homodimer. As to expression, expressed in vascular tissues. Detected in roots.

Its subcellular location is the nucleus. The protein is Transcription factor ORG3 (ORG3) of Arabidopsis thaliana (Mouse-ear cress).